A 334-amino-acid polypeptide reads, in one-letter code: MATLLAPAFELPTSLHSLTNLADSRIGAQIVECSDDFFAEAKRMLQFEAPIFVEDKFDDHGKWMDGWETRRKRHAGYDWCIVKLGVAGKIKAVDIDTTFFTGNYPASASLEGCYAPNGNTQEALWQPLLGNSILGPSQHHVFDVQNDAIFTHIRLNIFPDGGVARLRIYGDVQIQITDTDQTLDLLALQNGGRVIAYSDAHFGHPRNLINPGRGVNMGDGWETKRRRAPGFDWCLLALGQAGKIEKIEIDTAHFKGNYPAQVSIQAIYIEDATDPQLIPQSMFWPFLLEAQDMQMDHIHSYLNEVLAHEKVSHIRVNMIPDGGISRVRLWGKVV.

The protein belongs to the allantoicase family.

The enzyme catalyses allantoate + H2O = (S)-ureidoglycolate + urea. The protein operates within nitrogen metabolism; (S)-allantoin degradation; (S)-ureidoglycolate from allantoate (aminidohydrolase route): step 1/1. This Acinetobacter baylyi (strain ATCC 33305 / BD413 / ADP1) protein is Probable allantoicase.